A 110-amino-acid chain; its full sequence is Large ribosomal subunit protein uL22 (110 aa).

It belongs to the universal ribosomal protein uL22 family. Part of the 50S ribosomal subunit.

In terms of biological role, this protein binds specifically to 23S rRNA; its binding is stimulated by other ribosomal proteins, e.g. L4, L17, and L20. It is important during the early stages of 50S assembly. It makes multiple contacts with different domains of the 23S rRNA in the assembled 50S subunit and ribosome. Functionally, the globular domain of the protein is located near the polypeptide exit tunnel on the outside of the subunit, while an extended beta-hairpin is found that lines the wall of the exit tunnel in the center of the 70S ribosome. This Chromohalobacter salexigens (strain ATCC BAA-138 / DSM 3043 / CIP 106854 / NCIMB 13768 / 1H11) protein is Large ribosomal subunit protein uL22.